The primary structure comprises 539 residues: Glucose-6-phosphate isomerase (539 aa).

Glutamate 349 acts as the Proton donor in catalysis. Active-site residues include histidine 380 and lysine 508. The disordered stretch occupies residues 519–539 (ESGASGQHDPSTAGLIQRLKR).

This sequence belongs to the GPI family.

The protein localises to the cytoplasm. It carries out the reaction alpha-D-glucose 6-phosphate = beta-D-fructose 6-phosphate. Its pathway is carbohydrate biosynthesis; gluconeogenesis. It functions in the pathway carbohydrate degradation; glycolysis; D-glyceraldehyde 3-phosphate and glycerone phosphate from D-glucose: step 2/4. In terms of biological role, catalyzes the reversible isomerization of glucose-6-phosphate to fructose-6-phosphate. The polypeptide is Glucose-6-phosphate isomerase (Caulobacter vibrioides (strain ATCC 19089 / CIP 103742 / CB 15) (Caulobacter crescentus)).